The sequence spans 170 residues: Photosystem II extrinsic protein V (170 aa).

Positions 1-33 (MASLFASLGRSLIKLLIVLPVIIGLSISSPAMA) are cleaved as a signal peptide. Heme c-binding residues include cysteine 70, cysteine 73, histidine 74, and histidine 125.

It belongs to the cytochrome c family. PsbV subfamily. As to quaternary structure, PSII is composed of 1 copy each of membrane proteins PsbA, PsbB, PsbC, PsbD, PsbE, PsbF, PsbH, PsbI, PsbJ, PsbK, PsbL, PsbM, PsbT, PsbX, PsbY, Psb30/Ycf12, peripheral proteins PsbO, CyanoQ (PsbQ), PsbU, PsbV and a large number of cofactors. It forms dimeric complexes. The cofactor is heme c.

It is found in the cellular thylakoid membrane. Its function is as follows. One of the extrinsic, lumenal subunits of photosystem II (PSII). PSII is a light-driven water plastoquinone oxidoreductase, using light energy to abstract electrons from H(2)O, generating a proton gradient subsequently used for ATP formation. The extrinsic proteins stabilize the structure of photosystem II oxygen-evolving complex (OEC), the ion environment of oxygen evolution and protect the OEC against heat-induced inactivation. Low-potential cytochrome c that plays a role in the OEC of PSII. This is Photosystem II extrinsic protein V from Prochlorococcus marinus (strain MIT 9313).